The chain runs to 138 residues: Small ribosomal subunit protein uS9c (138 aa).

It belongs to the universal ribosomal protein uS9 family.

It is found in the plastid. It localises to the chloroplast. This Phaeodactylum tricornutum (strain CCAP 1055/1) protein is Small ribosomal subunit protein uS9c (rps9).